Consider the following 311-residue polypeptide: Cytosolic Fe-S cluster assembly factor Nubp1 homolog (311 aa).

The interval 1–20 (MQAPPPEHCPGVESENAGKG) is disordered. [4Fe-4S] cluster contacts are provided by Cys9, Cys23, Cys26, and Cys32. 63–70 (GKGGVGKS) serves as a coordination point for ATP. Positions 240 and 243 each coordinate [4Fe-4S] cluster.

This sequence belongs to the Mrp/NBP35 ATP-binding proteins family. NUBP1/NBP35 subfamily. As to quaternary structure, heterotetramer of 2 Nubp1 and 2 Nubp2 chains. [4Fe-4S] cluster serves as cofactor.

It localises to the cytoplasm. In terms of biological role, component of the cytosolic iron-sulfur (Fe/S) protein assembly (CIA) machinery. Required for maturation of extramitochondrial Fe-S proteins. The Nubp1-Nubp2 heterotetramer forms a Fe-S scaffold complex, mediating the de novo assembly of an Fe-S cluster and its transfer to target apoproteins. The polypeptide is Cytosolic Fe-S cluster assembly factor Nubp1 homolog (Drosophila simulans (Fruit fly)).